Consider the following 558-residue polypeptide: AP2-like ethylene-responsive transcription factor AIL5 (558 aa).

Residues 1 to 54 (MKNNNNKSSSSSSYDSSLSPSSSSSSHQNWLSFSLSNNNNNFNSSSNPNLTSST) show a composition bias toward low complexity. Disordered regions lie at residues 1-65 (MKNN…PSHL), 74-93 (SPVERQDGSPGVSPSDATAV), and 166-195 (HSSEVSSVHKQQPNPLAVSEASPTPKKNVE). DNA-binding regions (AP2/ERF) lie at residues 203–269 (IYRG…TNFP) and 305–363 (MYRG…TNFD). Positions 387 to 406 (SPATAAADKTVDLSPSDSPS) are disordered.

The protein belongs to the AP2/ERF transcription factor family. AP2 subfamily. In terms of tissue distribution, expressed in roots, seedlings, inflorescence, and siliques. Also detected at low levels in leaves.

The protein localises to the nucleus. Probably acts as a transcriptional activator. Binds to the GCC-box pathogenesis-related promoter element. May be involved in the regulation of gene expression by stress factors and by components of stress signal transduction pathways. Involved in the regulation of floral organs size. The protein is AP2-like ethylene-responsive transcription factor AIL5 of Arabidopsis thaliana (Mouse-ear cress).